We begin with the raw amino-acid sequence, 901 residues long: Alanine--tRNA ligase (901 aa).

Residues H600, H604, C704, and H708 each coordinate Zn(2+).

Belongs to the class-II aminoacyl-tRNA synthetase family. Zn(2+) is required as a cofactor.

Its subcellular location is the cytoplasm. It catalyses the reaction tRNA(Ala) + L-alanine + ATP = L-alanyl-tRNA(Ala) + AMP + diphosphate. Catalyzes the attachment of alanine to tRNA(Ala) in a two-step reaction: alanine is first activated by ATP to form Ala-AMP and then transferred to the acceptor end of tRNA(Ala). Also edits incorrectly charged Ser-tRNA(Ala) and Gly-tRNA(Ala) via its editing domain. This is Alanine--tRNA ligase from Ignicoccus hospitalis (strain KIN4/I / DSM 18386 / JCM 14125).